The sequence spans 242 residues: Large ribosomal subunit protein uL3 (242 aa).

A disordered region spans residues 131–165 (GRATHGNSVSHRTHGSTGQRQDPGKVFKGKKMAGH). The segment covering 135 to 150 (HGNSVSHRTHGSTGQR) has biased composition (polar residues). Residue Gln151 is modified to N5-methylglutamine.

This sequence belongs to the universal ribosomal protein uL3 family. As to quaternary structure, part of the 50S ribosomal subunit. Forms a cluster with proteins L14 and L19. In terms of processing, methylated by PrmB.

Its function is as follows. One of the primary rRNA binding proteins, it binds directly near the 3'-end of the 23S rRNA, where it nucleates assembly of the 50S subunit. The protein is Large ribosomal subunit protein uL3 of Chelativorans sp. (strain BNC1).